A 530-amino-acid polypeptide reads, in one-letter code: MRTTFATVALAFLSTVGALPYAPNHRHHRRDDDGVLTVYETILETVYVTAVPGANSSSSYTSYSTGLASVTESSDDGASTALPTTSTESVVVTTSAPAASSSATSYPATFVSTPLYTMDNVTAPVWSNTSVPVSTPETSATSSSEFFTSYPATSSESSSSYPASSTEVASSYSASSTEVTSSYPASSEVATSTSSYVAPVSSSVASSSEISAGSATSYVPTSSSSIALSSVVASASVSAANKGVSTPAVSSAAASSSAVVSSVVSSATSVAASSTISSATSSSASASPTSSSVSGKRGLAWIPGTDLGYSDNFVNKGINWYYNWGSYSSGLSSSFEYVLNQHDANSLSSASSVFTGGATVIGFNEPDLSAAGNPIDAATAASYYLQYLTPLRESGAIGYLGSPAISNVGEDWLSEFMSACSDCKIDFIACHWYGIDFSNLQDYINSLANYGLPIWLTEFACTNWDDSNLPSLDEVKTLMTSALGFLDGHGSVERYSWFAPATELGAGVGNNNALISSSGGLSEVGEIYIS.

The first 18 residues, Met1–Ala18, serve as a signal peptide directing secretion. N-linked (GlcNAc...) asparagine glycosylation is present at Asn55. Residues Ser69–Val90 are disordered. Asn120 and Asn128 each carry an N-linked (GlcNAc...) asparagine glycan.

It localises to the endoplasmic reticulum. Its subcellular location is the golgi apparatus. The protein resides in the secreted. It is found in the cell wall. The polypeptide is Alkali-sensitive linkage protein 1 (asl1) (Schizosaccharomyces pombe (strain 972 / ATCC 24843) (Fission yeast)).